Consider the following 39-residue polypeptide: Photosystem I reaction center subunit IX (39 aa).

Residues 7–27 (FLTTAPVAFILFSSFVFALFI) traverse the membrane as a helical segment.

This sequence belongs to the PsaJ family.

It localises to the cellular thylakoid membrane. Functionally, may help in the organization of the PsaE and PsaF subunits. The polypeptide is Photosystem I reaction center subunit IX (Synechococcus sp. (strain JA-3-3Ab) (Cyanobacteria bacterium Yellowstone A-Prime)).